We begin with the raw amino-acid sequence, 93 residues long: Alpha-defensin 7 (93 aa).

Residues 1–19 (MKTLILLSALVLLAFQVQA) form the signal peptide. The propeptide occupies 20 to 58 (DPIQNTDEETKTEEQPGEDDQAVSVSFGDPEGSSLQEES). Residues 22-56 (IQNTDEETKTEEQPGEDDQAVSVSFGDPEGSSLQE) form a disordered region. 3 cysteine pairs are disulfide-bonded: Cys64–Cys92, Cys66–Cys81, and Cys71–Cys91.

The protein belongs to the alpha-defensin family. Paneth cells of the small bowel.

It is found in the secreted. Its function is as follows. Probably contributes to the antimicrobial barrier function of the small bowel mucosa. In Mus musculus (Mouse), this protein is Alpha-defensin 7 (Defa7).